A 446-amino-acid polypeptide reads, in one-letter code: Tubulin beta-1 chain (446 aa).

Residues glutamine 11, glutamate 69, serine 138, glycine 142, threonine 143, glycine 144, asparagine 204, and asparagine 226 each contribute to the GTP site. Residue glutamate 69 participates in Mg(2+) binding.

The protein belongs to the tubulin family. As to quaternary structure, dimer of alpha and beta chains. A typical microtubule is a hollow water-filled tube with an outer diameter of 25 nm and an inner diameter of 15 nM. Alpha-beta heterodimers associate head-to-tail to form protofilaments running lengthwise along the microtubule wall with the beta-tubulin subunit facing the microtubule plus end conferring a structural polarity. Microtubules usually have 13 protofilaments but different protofilament numbers can be found in some organisms and specialized cells. The cofactor is Mg(2+).

The protein resides in the cytoplasm. It is found in the cytoskeleton. Its function is as follows. Tubulin is the major constituent of microtubules, a cylinder consisting of laterally associated linear protofilaments composed of alpha- and beta-tubulin heterodimers. Microtubules grow by the addition of GTP-tubulin dimers to the microtubule end, where a stabilizing cap forms. Below the cap, tubulin dimers are in GDP-bound state, owing to GTPase activity of alpha-tubulin. In Suillus bovinus (Jersey cow bolete), this protein is Tubulin beta-1 chain (TUBB1).